The sequence spans 288 residues: MKRTPHLLAIQSHVVFGHAGNSAAVFPMQRIGVNVWPLNTVQFSNHTQYKQWTGEVLAPQQIPALIEGIAAIGELGNCDAVLSGYLGSAAQGRAILTGVARIKAANPKALYLCDPVMGHPEKGCIVAPEVSDFLLQEAAAMADFMCPNQLELDSFSGRKPESLADCLAMARALLARGPKAVVVKHLDYPGKAADGFEMLLVTAEASWHLRRPLLAFPRQPVGVGDLTSGLFLSRILLGDDLVAAFEFTAAAVHEVLLETQACGSYELELVRAQDRIAHPRVKFDAVRL.

Substrate is bound by residues serine 12 and threonine 47–glutamine 48. ATP contacts are provided by residues aspartate 114, glutamate 151, lysine 184, and arginine 211–leucine 214. Substrate is bound at residue aspartate 225.

The protein belongs to the pyridoxine kinase family. PdxY subfamily. In terms of assembly, homodimer. The cofactor is Mg(2+).

It carries out the reaction pyridoxal + ATP = pyridoxal 5'-phosphate + ADP + H(+). The protein operates within cofactor metabolism; pyridoxal 5'-phosphate salvage; pyridoxal 5'-phosphate from pyridoxal: step 1/1. Its function is as follows. Pyridoxal kinase involved in the salvage pathway of pyridoxal 5'-phosphate (PLP). Catalyzes the phosphorylation of pyridoxal to PLP. This Pseudomonas savastanoi pv. phaseolicola (strain 1448A / Race 6) (Pseudomonas syringae pv. phaseolicola (strain 1448A / Race 6)) protein is Pyridoxal kinase PdxY.